The following is a 371-amino-acid chain: MVIGRHRNTRAIISLEAIKHNVATQISKLKDGQSLFAVVKANAYGHGMIPVAKAAKEAGANGFCVAIIDEGIALRESGIKDPILILGVNPASEAVCMAKHDLSVAVGTLEFLTEAQKLLQEEKQRLKIHLALDTGMGRIGFRNTEDLKEAVDFIEKHSDQLKCEGVFTHFSTADSKDPAYFEKQSQKFDELVGVLKKKPKYIHQANSATALWHPNFEGNLVRMGISMYGLNPSGDMIDETWNLEPALSLESELVAVKEVEAGSSIGYGATYTSSQSEWIGTVPIGYADGWLRRMQGFKVLIDGQYCEIVGRVCMDQFMVRLPKKYDLGTKVTLIGENNGKVITAQDVANYADTIHYEIMCNITERVPRIYK.

The active-site Proton acceptor; specific for D-alanine is the Lys40. Lys40 carries the N6-(pyridoxal phosphate)lysine modification. Residue Arg138 coordinates substrate. The Proton acceptor; specific for L-alanine role is filled by Tyr267. Met314 serves as a coordination point for substrate.

This sequence belongs to the alanine racemase family. Pyridoxal 5'-phosphate serves as cofactor.

The catalysed reaction is L-alanine = D-alanine. It functions in the pathway amino-acid biosynthesis; D-alanine biosynthesis; D-alanine from L-alanine: step 1/1. Its function is as follows. Catalyzes the interconversion of L-alanine and D-alanine. May also act on other amino acids. The protein is Alanine racemase (alr) of Ligilactobacillus salivarius (strain UCC118) (Lactobacillus salivarius).